The following is a 230-amino-acid chain: 7-cyano-7-deazaguanine synthase (230 aa).

10–20 is a binding site for ATP; it reads LSGGLDSATTA. Zn(2+) contacts are provided by C191, C199, C202, and C205.

Belongs to the QueC family. The cofactor is Zn(2+).

The enzyme catalyses 7-carboxy-7-deazaguanine + NH4(+) + ATP = 7-cyano-7-deazaguanine + ADP + phosphate + H2O + H(+). Its pathway is purine metabolism; 7-cyano-7-deazaguanine biosynthesis. Its function is as follows. Catalyzes the ATP-dependent conversion of 7-carboxy-7-deazaguanine (CDG) to 7-cyano-7-deazaguanine (preQ(0)). This Gloeothece citriformis (strain PCC 7424) (Cyanothece sp. (strain PCC 7424)) protein is 7-cyano-7-deazaguanine synthase.